The following is a 288-amino-acid chain: ATP synthase gamma chain (288 aa).

The protein belongs to the ATPase gamma chain family. In terms of assembly, F-type ATPases have 2 components, CF(1) - the catalytic core - and CF(0) - the membrane proton channel. CF(1) has five subunits: alpha(3), beta(3), gamma(1), delta(1), epsilon(1). CF(0) has three main subunits: a, b and c.

It is found in the cell inner membrane. Produces ATP from ADP in the presence of a proton gradient across the membrane. The gamma chain is believed to be important in regulating ATPase activity and the flow of protons through the CF(0) complex. This is ATP synthase gamma chain from Rickettsia bellii (strain OSU 85-389).